A 348-amino-acid chain; its full sequence is Uroporphyrinogen decarboxylase (348 aa).

Residues 24–28 (RQAGR), Asp-73, Tyr-150, Ser-205, and His-324 contribute to the substrate site.

The protein belongs to the uroporphyrinogen decarboxylase family. Homodimer.

It localises to the cytoplasm. It catalyses the reaction uroporphyrinogen III + 4 H(+) = coproporphyrinogen III + 4 CO2. It functions in the pathway porphyrin-containing compound metabolism; protoporphyrin-IX biosynthesis; coproporphyrinogen-III from 5-aminolevulinate: step 4/4. Functionally, catalyzes the decarboxylation of four acetate groups of uroporphyrinogen-III to yield coproporphyrinogen-III. This Roseiflexus sp. (strain RS-1) protein is Uroporphyrinogen decarboxylase.